The sequence spans 211 residues: Large ribosomal subunit protein eL13 (211 aa).

Position 16 is an N6-acetyllysine (lysine 16). Phosphoserine occurs at positions 52, 77, and 106. Glycyl lysine isopeptide (Lys-Gly) (interchain with G-Cter in SUMO2) cross-links involve residues lysine 123 and lysine 145. Lysine 174 participates in a covalent cross-link: Glycyl lysine isopeptide (Lys-Gly) (interchain with G-Cter in SUMO1); alternate. Residues lysine 174 and lysine 177 each participate in a glycyl lysine isopeptide (Lys-Gly) (interchain with G-Cter in SUMO2); alternate cross-link. The residue at position 177 (lysine 177) is an N6-acetyllysine; alternate.

The protein belongs to the eukaryotic ribosomal protein eL13 family. In terms of assembly, component of the 60S large ribosomal subunit (LSU). Higher levels of expression in benign breast lesions than in carcinomas.

It localises to the cytoplasm. Component of the ribosome, a large ribonucleoprotein complex responsible for the synthesis of proteins in the cell. The small ribosomal subunit (SSU) binds messenger RNAs (mRNAs) and translates the encoded message by selecting cognate aminoacyl-transfer RNA (tRNA) molecules. The large subunit (LSU) contains the ribosomal catalytic site termed the peptidyl transferase center (PTC), which catalyzes the formation of peptide bonds, thereby polymerizing the amino acids delivered by tRNAs into a polypeptide chain. The nascent polypeptides leave the ribosome through a tunnel in the LSU and interact with protein factors that function in enzymatic processing, targeting, and the membrane insertion of nascent chains at the exit of the ribosomal tunnel. As part of the LSU, it is probably required for its formation and the maturation of rRNAs. Plays a role in bone development. This Homo sapiens (Human) protein is Large ribosomal subunit protein eL13 (RPL13).